A 526-amino-acid chain; its full sequence is Alpha-N-acetylgalactosaminide alpha-2,6-sialyltransferase 1 (526 aa).

At Met-1–Gln-12 the chain is on the cytoplasmic side. A helical; Signal-anchor for type II membrane protein membrane pass occupies residues Ala-13–Pro-33. Residues Arg-34–Asn-526 are Lumenal-facing. The segment at Ser-49–Ser-182 is disordered. The segment covering Lys-81–Thr-106 has biased composition (basic and acidic residues). Positions Ala-161–Pro-171 are enriched in polar residues. N-linked (GlcNAc...) asparagine glycans are attached at residues Asn-206, Asn-228, Asn-259, Asn-303, and Asn-388. 2 disulfide bridges follow: Cys-207–Cys-290 and Cys-293–Cys-461.

The protein belongs to the glycosyltransferase 29 family. In terms of processing, glycosylated; autosialylated. In terms of tissue distribution, submaxillary gland, mammary gland, spleen and colon.

It localises to the golgi apparatus membrane. It catalyses the reaction a beta-D-galactosyl-(1-&gt;3)-N-acetyl-alpha-D-galactosaminyl derivative + CMP-N-acetyl-beta-neuraminate = a beta-D-galactosyl-(1-&gt;3)-[N-acetyl-alpha-neuraminyl-(2-&gt;6)]-N-acetyl-alpha-D-galactosaminyl derivative + CMP + H(+). The catalysed reaction is a 3-O-[N-acetyl-alpha-D-galactosaminyl]-L-seryl-[protein] + CMP-N-acetyl-beta-neuraminate = a 3-O-[N-acetyl-alpha-neuraminosyl-(2-&gt;6)-N-acetyl-alpha-D-galactosaminyl]-L-seryl-[protein] + CMP + H(+). The enzyme catalyses a 3-O-[N-acetyl-alpha-D-galactosaminyl]-L-threonyl-[protein] + CMP-N-acetyl-beta-neuraminate = a 3-O-[N-acetyl-alpha-neuraminosyl-(2-&gt;6)-N-acetyl-alpha-D-galactosaminyl]-L-threonyl-[protein] + CMP + H(+). It carries out the reaction a 3-O-[beta-D-galactosyl-(1-&gt;3)-N-acetyl-alpha-D-galactosaminyl]-L-seryl-[protein] + CMP-N-acetyl-beta-neuraminate = a 3-O-{beta-D-galactosyl-(1-&gt;3)-[N-acetyl-alpha-neuraminosyl-(2-&gt;6)]-N-acetyl-alpha-D-galactosaminyl}-L-seryl-[protein] + CMP + H(+). It catalyses the reaction a 3-O-[beta-D-galactosyl-(1-&gt;3)-N-acetyl-alpha-D-galactosaminyl]-L-threonyl-[protein] + CMP-N-acetyl-beta-neuraminate = a 3-O-{beta-D-galactosyl-(1-&gt;3)-[N-acetyl-alpha-neuraminosyl-(2-&gt;6)]-N-acetyl-alpha-D-galactosaminyl}-L-threonyl-[protein] + CMP + H(+). The catalysed reaction is a 3-O-[N-acetyl-alpha-neuraminyl-(2-&gt;3)-beta-D-galactosyl-(1-&gt;3)-N-acetyl-alpha-D-galactosaminyl]-L-threonyl-[protein] + CMP-N-acetyl-beta-neuraminate = a 3-O-{alpha-Neu5Ac-(2-&gt;3)-beta-D-Gal-(1-&gt;3)-[alpha-Neu5Ac-(2-&gt;6)]-alpha-D-GalNAc}-L-threonyl-[protein] + CMP + H(+). The protein operates within protein modification; protein glycosylation. In terms of biological role, protein sialyltransferase specifically expressed in goblet cells that plays a key role in intestinal host-commensal homeostasis. Conjugates sialic acid with an alpha-2-6 linkage to N-acetylgalactosamine (GalNAc) glycan chains linked to serine or threonine in glycoproteins. Catalyzes the formation of the sialyl-Tn (S-Tn) antigen, an antigen found in intestinal goblet cells. Protein sialylation in globlet cells is essential for mucus integrity and is required to protect the intestinal mucus against excessive bacterial proteolytic degradation. In Mus musculus (Mouse), this protein is Alpha-N-acetylgalactosaminide alpha-2,6-sialyltransferase 1.